Reading from the N-terminus, the 302-residue chain is 4-hydroxy-tetrahydrodipicolinate synthase (302 aa).

A pyruvate-binding site is contributed by Thr46. Residue Tyr134 is the Proton donor/acceptor of the active site. Lys162 serves as the catalytic Schiff-base intermediate with substrate. Ile204 is a pyruvate binding site.

Belongs to the DapA family. Homotetramer; dimer of dimers.

It is found in the cytoplasm. It carries out the reaction L-aspartate 4-semialdehyde + pyruvate = (2S,4S)-4-hydroxy-2,3,4,5-tetrahydrodipicolinate + H2O + H(+). The protein operates within amino-acid biosynthesis; L-lysine biosynthesis via DAP pathway; (S)-tetrahydrodipicolinate from L-aspartate: step 3/4. Functionally, catalyzes the condensation of (S)-aspartate-beta-semialdehyde [(S)-ASA] and pyruvate to 4-hydroxy-tetrahydrodipicolinate (HTPA). The chain is 4-hydroxy-tetrahydrodipicolinate synthase from Xanthomonas axonopodis pv. citri (strain 306).